The chain runs to 286 residues: uncharacterized protein (286 aa).

NADP(+) is bound by residues I54, N128, and K162. S178 acts as the Proton donor in catalysis. Residues Y192, K196, I225, and T227 each coordinate NADP(+). Y192 (proton acceptor) is an active-site residue. Catalysis depends on K196, which acts as the Lowers pKa of active site Tyr.

This sequence belongs to the short-chain dehydrogenases/reductases (SDR) family.

This is an uncharacterized protein from Schizosaccharomyces pombe (strain 972 / ATCC 24843) (Fission yeast).